Consider the following 209-residue polypeptide: Ribosomal RNA large subunit methyltransferase E (209 aa).

S-adenosyl-L-methionine is bound by residues G63, W65, D83, D99, and D124. K164 acts as the Proton acceptor in catalysis.

The protein belongs to the class I-like SAM-binding methyltransferase superfamily. RNA methyltransferase RlmE family.

Its subcellular location is the cytoplasm. The enzyme catalyses uridine(2552) in 23S rRNA + S-adenosyl-L-methionine = 2'-O-methyluridine(2552) in 23S rRNA + S-adenosyl-L-homocysteine + H(+). Specifically methylates the uridine in position 2552 of 23S rRNA at the 2'-O position of the ribose in the fully assembled 50S ribosomal subunit. This chain is Ribosomal RNA large subunit methyltransferase E, found in Shewanella sp. (strain MR-7).